Consider the following 166-residue polypeptide: Cofilin-1 (166 aa).

Residue Ala-2 is modified to N-acetylalanine. At Ser-3 the chain carries Phosphoserine; by NRK. The ADF-H domain maps to 4–153 (GVAVSDGVIK…KDRCTLAEKL (150 aa)). Ser-8 bears the Phosphoserine mark. Residue Lys-13 is modified to N6-acetyllysine. The residue at position 25 (Thr-25) is a Phosphothreonine. Positions 30 to 34 (KKRKK) match the Nuclear localization signal motif. Ser-41 is subject to Phosphoserine. Thr-63 carries the phosphothreonine modification. Tyr-68 bears the Phosphotyrosine mark. Position 73 is an N6-acetyllysine (Lys-73). Tyr-82 is modified (phosphotyrosine). Ser-108 is subject to Phosphoserine. A Glycyl lysine isopeptide (Lys-Gly) (interchain with G-Cter in SUMO2) cross-link involves residue Lys-132. Tyr-140 is modified (phosphotyrosine). N6-acetyllysine is present on Lys-144. Ser-156 is modified (phosphoserine).

The protein belongs to the actin-binding proteins ADF family. In terms of assembly, can bind G- and F-actin in a 1:1 ratio of cofilin to actin. It is a major component of intranuclear and cytoplasmic actin rods. Interacts with the subcortical maternal complex (SCMC) via interaction with TLE6 isoform 1 and NLRP5. Interacts with C9orf72. As to quaternary structure, (Microbial infection) Interacts with human respiratory syncytial virus (HRSV) matrix protein; this interaction probably facilitates viral replication. In terms of processing, inactivated by phosphorylation on Ser-3. Phosphorylated on Ser-3 in resting cells. Dephosphorylated by PDXP/chronophin; this restores its activity in promoting actin filament depolymerization. The phosphorylation of Ser-24 may prevent recognition of the nuclear localization signal. Phosphorylated via a ARRB1-RAC1-LIMK1-PAK1 cascade upon active ligand stimulation of atypical chemokine receptor ACKR2. Widely distributed in various tissues.

It localises to the nucleus matrix. The protein resides in the cytoplasm. The protein localises to the cytoskeleton. Its subcellular location is the cell projection. It is found in the ruffle membrane. It localises to the lamellipodium membrane. The protein resides in the lamellipodium. The protein localises to the growth cone. Its subcellular location is the axon. In terms of biological role, binds to F-actin and exhibits pH-sensitive F-actin depolymerizing activity. In conjunction with the subcortical maternal complex (SCMC), plays an essential role for zygotes to progress beyond the first embryonic cell divisions via regulation of actin dynamics. Required for the centralization of the mitotic spindle and symmetric division of zygotes. Plays a role in the regulation of cell morphology and cytoskeletal organization in epithelial cells. Required for the up-regulation of atypical chemokine receptor ACKR2 from endosomal compartment to cell membrane, increasing its efficiency in chemokine uptake and degradation. Required for neural tube morphogenesis and neural crest cell migration. The polypeptide is Cofilin-1 (CFL1) (Homo sapiens (Human)).